We begin with the raw amino-acid sequence, 566 residues long: Erythroid membrane-associated protein (566 aa).

The first 29 residues, M1–G29, serve as a signal peptide directing secretion. An Ig-like V-type domain is found at D30–Q139. The Extracellular portion of the chain corresponds to D30–A246. C47 and C123 form a disulfide bridge. N-linked (GlcNAc...) asparagine glycans are attached at residues N135 and N214. A helical membrane pass occupies residues V247–I267. Residues C268 to L566 lie on the Cytoplasmic side of the membrane. The B30.2/SPRY domain occupies K311–S509. S509 carries the post-translational modification Phosphoserine.

This sequence belongs to the immunoglobulin superfamily. BTN/MOG family. Glycosylated. In terms of tissue distribution, expressed in spleen and bone marrow.

Its subcellular location is the cell membrane. The protein localises to the cytoplasm. Functionally, possible role as a cell-adhesion or receptor molecule of erythroid cells. The polypeptide is Erythroid membrane-associated protein (Ermap) (Mus musculus (Mouse)).